Consider the following 452-residue polypeptide: Maltoporin (452 aa).

Positions 1-25 are cleaved as a signal peptide; it reads MMITLRKLPLAVAVAAGVMSAQAMA.

This sequence belongs to the porin LamB (TC 1.B.3) family. In terms of assembly, homotrimer formed of three 18-stranded antiparallel beta-barrels, containing three independent channels.

Its subcellular location is the cell outer membrane. The catalysed reaction is beta-maltose(in) = beta-maltose(out). Its function is as follows. Involved in the transport of maltose and maltodextrins. This chain is Maltoporin, found in Salmonella agona (strain SL483).